Here is a 38-residue protein sequence, read N- to C-terminus: uncharacterized protein (38 aa).

It belongs to the asfivirus C84L family.

This is an uncharacterized protein from Ornithodoros (relapsing fever ticks).